A 156-amino-acid polypeptide reads, in one-letter code: Small ribosomal subunit protein uS7 (156 aa).

The protein belongs to the universal ribosomal protein uS7 family. As to quaternary structure, part of the 30S ribosomal subunit. Contacts proteins S9 and S11.

Its function is as follows. One of the primary rRNA binding proteins, it binds directly to 16S rRNA where it nucleates assembly of the head domain of the 30S subunit. Is located at the subunit interface close to the decoding center, probably blocks exit of the E-site tRNA. This chain is Small ribosomal subunit protein uS7, found in Jannaschia sp. (strain CCS1).